A 181-amino-acid chain; its full sequence is Ribonuclease HII (181 aa).

Positions 1 to 181 (MICGIDEVGR…SLHRKNFKLI (181 aa)) constitute an RNase H type-2 domain. The a divalent metal cation site is built by D6, E7, and D98.

Belongs to the RNase HII family. Mn(2+) is required as a cofactor. The cofactor is Mg(2+).

The protein localises to the cytoplasm. It carries out the reaction Endonucleolytic cleavage to 5'-phosphomonoester.. In terms of biological role, endonuclease that specifically degrades the RNA of RNA-DNA hybrids. The protein is Ribonuclease HII of Borreliella afzelii (strain PKo) (Borrelia afzelii).